The following is a 100-amino-acid chain: NADH-quinone oxidoreductase subunit K (100 aa).

A run of 3 helical transmembrane segments spans residues 4-24 (TSYY…GVLI), 29-49 (LVLF…LVTF), and 60-80 (IVVF…LALL).

The protein belongs to the complex I subunit 4L family. In terms of assembly, NDH-1 is composed of 14 different subunits. Subunits NuoA, H, J, K, L, M, N constitute the membrane sector of the complex.

The protein resides in the cell membrane. It carries out the reaction a quinone + NADH + 5 H(+)(in) = a quinol + NAD(+) + 4 H(+)(out). Its function is as follows. NDH-1 shuttles electrons from NADH, via FMN and iron-sulfur (Fe-S) centers, to quinones in the respiratory chain. The immediate electron acceptor for the enzyme in this species is believed to be ubiquinone. Couples the redox reaction to proton translocation (for every two electrons transferred, four hydrogen ions are translocated across the cytoplasmic membrane), and thus conserves the redox energy in a proton gradient. The polypeptide is NADH-quinone oxidoreductase subunit K (Roseiflexus sp. (strain RS-1)).